A 149-amino-acid polypeptide reads, in one-letter code: Nucleoside diphosphate kinase (149 aa).

Lys9, Phe57, Arg85, Thr91, Arg102, and Asn112 together coordinate ATP. His115 (pros-phosphohistidine intermediate) is an active-site residue.

This sequence belongs to the NDK family. Homotetramer. It depends on Mg(2+) as a cofactor.

It is found in the cytoplasm. It catalyses the reaction a 2'-deoxyribonucleoside 5'-diphosphate + ATP = a 2'-deoxyribonucleoside 5'-triphosphate + ADP. The catalysed reaction is a ribonucleoside 5'-diphosphate + ATP = a ribonucleoside 5'-triphosphate + ADP. Major role in the synthesis of nucleoside triphosphates other than ATP. The ATP gamma phosphate is transferred to the NDP beta phosphate via a ping-pong mechanism, using a phosphorylated active-site intermediate. The sequence is that of Nucleoside diphosphate kinase from Thermomicrobium roseum (strain ATCC 27502 / DSM 5159 / P-2).